The following is a 414-amino-acid chain: Peptidoglycan beta-N-acetylmuramidase NamZ (414 aa).

The first 23 residues, 1-23 (MRKTIFAFLTGLMMFGTITAASA), serve as a signal peptide directing secretion.

Belongs to the glycoside hydrolase 171 family. In terms of assembly, homodimer in solution.

The protein resides in the secreted. It carries out the reaction Hydrolysis of terminal, non-reducing N-acetylmuramic residues.. Its function is as follows. Catalyzes the exo-lytic cleavage of beta-1,4-N-acetylmuramate (beta-1,4-MurNAc) from the non-reducing ends of peptidoglycan chains. Specifically hydrolyzes the natural, peptidoglycan-derived disaccharide MurNAc-GlcNAc and the artificial substrate para-nitrophenyl beta-N-acetylmuramic acid (pNP-MurNAc). Requires a MurNAc entity at the non-reducing end, and cannot cleave GlcNAc-MurNAc. Probably plays a role in cell wall turnover and recycling. The polypeptide is Peptidoglycan beta-N-acetylmuramidase NamZ (Bacillus subtilis (strain 168)).